Reading from the N-terminus, the 873-residue chain is Chitin synthase F (873 aa).

A disordered region spans residues 1-105 (MEDAHDQSSR…KSGSGLRRYP (105 aa)). Composition is skewed to polar residues over residues 33-46 (SYPSNENEDVSQSL), 58-72 (ISSQWPPGTIQQNPS), and 80-98 (ESEVASQTSWQRRQTTKSG). A glycan (N-linked (GlcNAc...) asparagine) is linked at Asn-506. Transmembrane regions (helical) follow at residues 532 to 554 (LVFLHVQLVYNICQLTMTWFSLA), 588 to 608 (IVNNIIKALYLAFLMQQFFLA), 621 to 641 (ILTFLYFAIVQLYILILSFYL), 672 to 692 (GLVLIALVSTYGTYIIASILY), 702 to 722 (SWAYFLGMPLTINVLNVYAFC), 802 to 822 (LVLLWTLCNGLLALLINNDSV), and 841 to 861 (VILWATSGLSVFRFLGALWFL).

Belongs to the chitin synthase family. Class III subfamily.

It is found in the cell membrane. It catalyses the reaction [(1-&gt;4)-N-acetyl-beta-D-glucosaminyl](n) + UDP-N-acetyl-alpha-D-glucosamine = [(1-&gt;4)-N-acetyl-beta-D-glucosaminyl](n+1) + UDP + H(+). Its function is as follows. Polymerizes chitin, a structural polymer of the cell wall and septum, by transferring the sugar moiety of UDP-GlcNAc to the non-reducing end of the growing chitin polymer. Plays an important role in septal growth or maintenance. Mediates colony spore formation. This chain is Chitin synthase F, found in Aspergillus niger (strain ATCC MYA-4892 / CBS 513.88 / FGSC A1513).